The primary structure comprises 350 residues: Phosphotriesterase-related protein (350 aa).

A divalent metal cation is bound by residues His22, His24, Glu169, His201, His230, and Asp298.

This sequence belongs to the metallo-dependent hydrolases superfamily. Phosphotriesterase family. Requires a divalent metal cation as cofactor.

The chain is Phosphotriesterase-related protein from Drosophila persimilis (Fruit fly).